We begin with the raw amino-acid sequence, 695 residues long: Follicle-stimulating hormone receptor (695 aa).

The first 17 residues, 1 to 17 (MALLLVSLLAFLSLGSG), serve as a signal peptide directing secretion. Disulfide bonds link C18–C25 and C23–C32. An LRRNT domain is found at 18 to 46 (CHHRICHCSNRVFLCQESKVTEIPSDLPR). Residues 18-366 (CHHRICHCSN…EDIMGYNILR (349 aa)) are Extracellular-facing. 9 LRR repeats span residues 49 to 72 (IELRFVLTKLRVIQKGAFSGFGDL), 73 to 97 (EKIEISQNDVLEVIEADVFSNLPKL), 98 to 118 (HEIRIEKANNLLYINPEAFQN), 119 to 143 (LPNLQYLLISNTGIKHLPDVHKIHS), 144 to 169 (LQKVLLDIQDNINIHTIERNSFVGLS), 170 to 192 (FESVILWLNKNGIQEIHNCAFNG), 193 to 216 (TQLDELNLSDNNNLEELPNDVFHG), 217 to 240 (ASGPVILDISRTRIHSLPSYGLEN), and 241 to 259 (LKKLRARSTYNLKKLPTLE). Residues N191 and N199 are each glycosylated (N-linked (GlcNAc...) asparagine). 4 disulfides stabilise this stretch: C275-C346, C276-C292, C276-C356, and C292-C338. N-linked (GlcNAc...) asparagine glycosylation is found at N293 and N318. A Sulfotyrosine modification is found at Y335. The helical transmembrane segment at 367 to 387 (VLIWFISILAITGNIIVLVIL) threads the bilayer. Residues 388-398 (TTSQYKLTVPR) are Cytoplasmic-facing. Residues 399–421 (FLMCNLAFADLCIGIYLLLIASV) form a helical membrane-spanning segment. At 422–443 (DIHTKSQYHNYAIDWQTGAGCD) the chain is on the extracellular side. A disulfide bond links C442 and C517. Residues 444–465 (AAGFFTVFASELSVYTLTAITL) traverse the membrane as a helical segment. The Cytoplasmic portion of the chain corresponds to 466 to 485 (ERWHTITHAMQLDCKVQLRH). Residues 486–508 (AASVMVMGWIFAFAAALFPIFGI) traverse the membrane as a helical segment. Residues 509-528 (SSYMKVSICLPMDIDSPLSQ) lie on the Extracellular side of the membrane. A helical transmembrane segment spans residues 529–550 (LYVMSLLVLNVLAFVVICGCYI). Topologically, residues 551 to 573 (HIYLTVRNPNIVSSSSDTRIAKR) are cytoplasmic. Residues 574–597 (MAMLIFTDFLCMAPISFFAISASL) form a helical membrane-spanning segment. Residues 598 to 608 (KVPLITVSKAK) lie on the Extracellular side of the membrane. The chain crosses the membrane as a helical span at residues 609-630 (ILLVLFHPINSCANPFLYAIFT). The Cytoplasmic portion of the chain corresponds to 631–695 (KNFRRDFFIL…LVPLSHLAQN (65 aa)).

It belongs to the G-protein coupled receptor 1 family. FSH/LSH/TSH subfamily. Homotrimer. Functions as a homotrimer binding the FSH hormone heterodimer composed of CGA and FSHB. Interacts with ARRB2. Interacts with APPL2; interaction is independent of follicle stimulating hormone stimulation. Sulfated. Post-translationally, N-glycosylated; indirectly required for FSH-binding, possibly via a conformational change that allows high affinity binding of hormone. Sertoli cells and ovarian granulosa cells.

It localises to the cell membrane. In terms of biological role, g protein-coupled receptor for follitropin, the follicle-stimulating hormone. Through cAMP production activates the downstream PI3K-AKT and ERK1/ERK2 signaling pathways. The sequence is that of Follicle-stimulating hormone receptor (FSHR) from Homo sapiens (Human).